The chain runs to 292 residues: Formamidopyrimidine-DNA glycosylase (292 aa).

The active-site Schiff-base intermediate with DNA is Pro-2. The active-site Proton donor is Glu-3. The active-site Proton donor; for beta-elimination activity is Lys-61. Residues His-96, Arg-115, and Lys-161 each coordinate DNA. The segment at 247-281 (SAYGQEDRPCPRCGTAIRREKFMNRSSFSCPKCQP) adopts an FPG-type zinc-finger fold. The active-site Proton donor; for delta-elimination activity is Arg-271.

Belongs to the FPG family. As to quaternary structure, monomer. The cofactor is Zn(2+).

It catalyses the reaction Hydrolysis of DNA containing ring-opened 7-methylguanine residues, releasing 2,6-diamino-4-hydroxy-5-(N-methyl)formamidopyrimidine.. The enzyme catalyses 2'-deoxyribonucleotide-(2'-deoxyribose 5'-phosphate)-2'-deoxyribonucleotide-DNA = a 3'-end 2'-deoxyribonucleotide-(2,3-dehydro-2,3-deoxyribose 5'-phosphate)-DNA + a 5'-end 5'-phospho-2'-deoxyribonucleoside-DNA + H(+). Its function is as follows. Involved in base excision repair of DNA damaged by oxidation or by mutagenic agents. Acts as a DNA glycosylase that recognizes and removes damaged bases. Has a preference for oxidized purines, such as 7,8-dihydro-8-oxoguanine (8-oxoG). Has AP (apurinic/apyrimidinic) lyase activity and introduces nicks in the DNA strand. Cleaves the DNA backbone by beta-delta elimination to generate a single-strand break at the site of the removed base with both 3'- and 5'-phosphates. The chain is Formamidopyrimidine-DNA glycosylase from Rhodococcus jostii (strain RHA1).